The chain runs to 372 residues: N-methyl-L-tryptophan oxidase (372 aa).

Residue 4–34 participates in FAD binding; the sequence is DLIIIGSGSVGAAAGYYATRAGLKVLMTDAH. Cys-307 bears the S-8alpha-FAD cysteine mark.

The protein belongs to the MSOX/MTOX family. MTOX subfamily. In terms of assembly, monomer. FAD is required as a cofactor.

It carries out the reaction N(alpha)-methyl-L-tryptophan + O2 + H2O = L-tryptophan + formaldehyde + H2O2. Its function is as follows. Catalyzes the oxidative demethylation of N-methyl-L-tryptophan. The sequence is that of N-methyl-L-tryptophan oxidase from Salmonella typhi.